We begin with the raw amino-acid sequence, 292 residues long: MSTVADTRLLPGKPVRARILSEVSAYVNQVGRIGKLVSISIGNVPEVAVYVRNQARAASAVGVPFDQQLWDRSISQEVCQSLIREMNDDPDVLGIILQRPVPDHINVRALQAAIHPLKDVEGMNPASIGNIVYNDVAMAPCTAAAAIELIRETGLSMAGLEVVMVGHSEIVGKPVAMMLMAEGATVTVCHHMTRSDAMHSRRADVVVVAVGKAHLIGPDMIKPGAVVIDIGINHVPGPDGPVVVGDVQTDAVKDVAGWITPVPGGVGLVTVAILLRNAIRAHQQQRAAGWIH.

NADP(+)-binding positions include 166–168 (GHS) and isoleucine 232.

Belongs to the tetrahydrofolate dehydrogenase/cyclohydrolase family. Homodimer.

The catalysed reaction is (6R)-5,10-methylene-5,6,7,8-tetrahydrofolate + NADP(+) = (6R)-5,10-methenyltetrahydrofolate + NADPH. It catalyses the reaction (6R)-5,10-methenyltetrahydrofolate + H2O = (6R)-10-formyltetrahydrofolate + H(+). It participates in one-carbon metabolism; tetrahydrofolate interconversion. Catalyzes the oxidation of 5,10-methylenetetrahydrofolate to 5,10-methenyltetrahydrofolate and then the hydrolysis of 5,10-methenyltetrahydrofolate to 10-formyltetrahydrofolate. This chain is Bifunctional protein FolD 2, found in Ruegeria pomeroyi (strain ATCC 700808 / DSM 15171 / DSS-3) (Silicibacter pomeroyi).